The chain runs to 666 residues: Endogenous retrovirus group K member 24 Gag polyprotein (666 aa).

G2 is lipidated: N-myristoyl glycine. A disordered region spans residues G165–L264. Over residues G232–P247 the composition is skewed to pro residues. 2 consecutive CCHC-type zinc fingers follow at residues G544–V561 and D580–S597. The disordered stretch occupies residues K598–L641. Positions Q604–G622 are enriched in polar residues. The segment covering F624–P640 has biased composition (low complexity).

This sequence belongs to the beta type-B retroviral Gag protein family. HERV class-II K(HML-2) gag subfamily. Post-translationally, myristoylation is essential for retroviral assembly. Alteration of the glycine residue leads to a block in the budding of particles and an accumulation of Gag inside the cell. Specific enzymatic cleavages may yield mature proteins.

Its subcellular location is the cell membrane. The products of the Gag polyproteins of infectious retroviruses perform highly complex orchestrated tasks during the assembly, budding, maturation, and infection stages of the viral replication cycle. During viral assembly, the proteins form membrane associations and self-associations that ultimately result in budding of an immature virion from the infected cell. Gag precursors also function during viral assembly to selectively bind and package two plus strands of genomic RNA. Endogenous Gag proteins may have kept, lost or modified their original function during evolution. This is Endogenous retrovirus group K member 24 Gag polyprotein (ERVK-24) from Homo sapiens (Human).